The chain runs to 390 residues: MSDKDEFAAKKKDLVNTPVDLYPPENPMLGPSPMMDSFRETLWHDGGFNVHTDADTSFRGNNNIDIPLEMGWNMAQFPADSGFIERAAKFSFFGCGEMMMNQQQSSLGVPDSTGLFLQDTQIPSGSKLDNGPLTDASKLVKERSINNVSEDSQSSGGNGHDDAKCGQTSSKGFSSKKRKRIGKDCEEEEDKKQKDEQSPTSNANKTNSEKQPSDSLKDGYIHMRARRGQATNSHSLAERVRREKISERMKFLQDLVPGCDKVTGKAVMLDEIINYVQSLQCQIEFLSMKLSAVNPVLDFNLESLLAKDALQSSAPTFPHNMSMLYPPVSYLSQTGFMQPNISSMSLLSGGLKRQETHGYESDHHNLVHMNHETGTAPDHEDTTADMKVEP.

A disordered region spans residues 147–217 (NVSEDSQSSG…SEKQPSDSLK (71 aa)). Basic and acidic residues predominate over residues 207–217 (NSEKQPSDSLK). A bHLH domain is found at 229 to 279 (QATNSHSLAERVRREKISERMKFLQDLVPGCDKVTGKAVMLDEIINYVQSL).

Homodimer. Interacts with IBH1. Binds reversibly to CRY2 after blue light illumination. Expressed constitutively in roots, leaves, stems, and flowers.

Its subcellular location is the nucleus. Functionally, transcriptional activator involved in cell elongation. Regulates the expression of a subset of genes involved in cell expansion by binding to the G-box motif. Binds to chromatin DNA of the FT gene and promotes its expression, and thus triggers flowering in response to blue light. The protein is Transcription factor bHLH76 (BHLH76) of Arabidopsis thaliana (Mouse-ear cress).